The primary structure comprises 107 residues: Toxin MT2730 (107 aa).

Residues 1–42 form a disordered region; sequence MTHKRTKRQPAIAAGLNAPRRNRVGRQHGWPADVPSAEQRRA.

Functionally, toxic component of a type II toxin-antitoxin (TA) system. Its toxic effect is neutralized by coexpression with cognate antitoxin MT2731. This chain is Toxin MT2730, found in Mycobacterium tuberculosis (strain CDC 1551 / Oshkosh).